The following is a 155-amino-acid chain: SsrA-binding protein (155 aa).

Residues 135 to 147 (TIKRRDQERDIKK) show a composition bias toward basic and acidic residues. The interval 135–155 (TIKRRDQERDIKKQMKHYNAR) is disordered.

The protein belongs to the SmpB family.

The protein resides in the cytoplasm. Required for rescue of stalled ribosomes mediated by trans-translation. Binds to transfer-messenger RNA (tmRNA), required for stable association of tmRNA with ribosomes. tmRNA and SmpB together mimic tRNA shape, replacing the anticodon stem-loop with SmpB. tmRNA is encoded by the ssrA gene; the 2 termini fold to resemble tRNA(Ala) and it encodes a 'tag peptide', a short internal open reading frame. During trans-translation Ala-aminoacylated tmRNA acts like a tRNA, entering the A-site of stalled ribosomes, displacing the stalled mRNA. The ribosome then switches to translate the ORF on the tmRNA; the nascent peptide is terminated with the 'tag peptide' encoded by the tmRNA and targeted for degradation. The ribosome is freed to recommence translation, which seems to be the essential function of trans-translation. The protein is SsrA-binding protein of Streptococcus pyogenes serotype M3 (strain SSI-1).